Consider the following 237-residue polypeptide: Ribonuclease PH (237 aa).

Phosphate is bound by residues arginine 86 and 124–126 (GTR).

This sequence belongs to the RNase PH family. In terms of assembly, homohexameric ring arranged as a trimer of dimers.

The enzyme catalyses tRNA(n+1) + phosphate = tRNA(n) + a ribonucleoside 5'-diphosphate. Its function is as follows. Phosphorolytic 3'-5' exoribonuclease that plays an important role in tRNA 3'-end maturation. Removes nucleotide residues following the 3'-CCA terminus of tRNAs; can also add nucleotides to the ends of RNA molecules by using nucleoside diphosphates as substrates, but this may not be physiologically important. Probably plays a role in initiation of 16S rRNA degradation (leading to ribosome degradation) during starvation. This is Ribonuclease PH from Coxiella burnetii (strain RSA 331 / Henzerling II).